A 184-amino-acid polypeptide reads, in one-letter code: uncharacterized protein (184 aa).

An N-terminal signal peptide occupies residues 1–20 (MTLRKILALTCLLLPMMASA).

This sequence to H.influenzae HI_0045.

It localises to the periplasm. This is an uncharacterized protein from Escherichia coli (strain K12).